We begin with the raw amino-acid sequence, 216 residues long: Probable transaldolase (216 aa).

The active-site Schiff-base intermediate with substrate is the Lys83.

This sequence belongs to the transaldolase family. Type 3B subfamily.

The protein localises to the cytoplasm. It catalyses the reaction D-sedoheptulose 7-phosphate + D-glyceraldehyde 3-phosphate = D-erythrose 4-phosphate + beta-D-fructose 6-phosphate. It functions in the pathway carbohydrate degradation; pentose phosphate pathway; D-glyceraldehyde 3-phosphate and beta-D-fructose 6-phosphate from D-ribose 5-phosphate and D-xylulose 5-phosphate (non-oxidative stage): step 2/3. Functionally, transaldolase is important for the balance of metabolites in the pentose-phosphate pathway. This Desulforamulus reducens (strain ATCC BAA-1160 / DSM 100696 / MI-1) (Desulfotomaculum reducens) protein is Probable transaldolase.